A 32-amino-acid chain; its full sequence is Chlorophyll a-b binding protein 2, chloroplastic (32 aa).

2 residues coordinate chlorophyll a: glutamate 19 and histidine 22. Chlorophyll b is bound at residue arginine 24.

This sequence belongs to the light-harvesting chlorophyll a/b-binding (LHC) protein family. The LHC complex consists of chlorophyll a-b binding proteins. It depends on Binds at least 14 chlorophylls (8 Chl-a and 6 Chl-b) and carotenoids such as lutein and neoxanthin. as a cofactor. In terms of processing, photoregulated by reversible phosphorylation of its threonine residues.

It is found in the plastid. Its subcellular location is the chloroplast thylakoid membrane. In terms of biological role, the light-harvesting complex (LHC) functions as a light receptor, it captures and delivers excitation energy to photosystems with which it is closely associated. The protein is Chlorophyll a-b binding protein 2, chloroplastic of Populus euphratica (Euphrates poplar).